Consider the following 92-residue polypeptide: Small ribosomal subunit protein uS15c (92 aa).

This sequence belongs to the universal ribosomal protein uS15 family. Part of the 30S ribosomal subunit.

The protein resides in the plastid. It is found in the chloroplast. The polypeptide is Small ribosomal subunit protein uS15c (rps15) (Carica papaya (Papaya)).